A 439-amino-acid chain; its full sequence is uncharacterized protein (439 aa).

CBS domains follow at residues L195 to K254 and M256 to Q314.

This is an uncharacterized protein from Bacillus subtilis (strain 168).